The chain runs to 334 residues: Pre-mRNA leakage protein 39 (334 aa).

As to quaternary structure, interacts with MLP1 and MLP2.

It is found in the nucleus membrane. Its function is as follows. Involved in the nuclear retention of improperly spliced pre-mRNAs. In Saccharomyces cerevisiae (strain ATCC 204508 / S288c) (Baker's yeast), this protein is Pre-mRNA leakage protein 39 (PML39).